Here is a 316-residue protein sequence, read N- to C-terminus: Spermidine synthase (316 aa).

In terms of domain architecture, PABS spans Pro25–Thr262. Gln56 contributes to the S-adenosyl 3-(methylsulfanyl)propylamine binding site. Tyr86 is a binding site for putrescine. S-adenosyl 3-(methylsulfanyl)propylamine contacts are provided by residues Gln87, Asp111, Glu131, Asp162 to Gly163, and Asp181. The Proton acceptor role is filled by Asp181. Putrescine-binding positions include Asp181–Asp184 and Tyr250.

The protein belongs to the spermidine/spermine synthase family.

It catalyses the reaction S-adenosyl 3-(methylsulfanyl)propylamine + putrescine = S-methyl-5'-thioadenosine + spermidine + H(+). Its pathway is amine and polyamine biosynthesis; spermidine biosynthesis; spermidine from putrescine: step 1/1. This chain is Spermidine synthase, found in Coffea arabica (Arabian coffee).